A 455-amino-acid polypeptide reads, in one-letter code: Adhesin YadA (455 aa).

An N-terminal signal peptide occupies residues 1-25; the sequence is MTKDFKISVSAALISALFSSPYAFA. Residues 26–363 form a surface exposed passenger domain region; the sequence is DDYDGIPNLT…KKAIRESNQY (338 aa). The stretch at 209 to 243 forms a coiled coil; that stretch reads VNVAQLKKEIEKTQENTNKRSAELLANANAYADNK. Positions 364-402 are outer membrane translocation of the passenger domain; it reads TDHKFRQLDNRLDKLDTRVDKGLASSAALNSLFQPYGVG. Beta stranded transmembrane passes span 402-412, 416-427, 434-440, and 444-455; these read GKVNFTAGVGG, SQALAIGSGYRV, KAGVAYA, and DVMYNASFNIEW. The tract at residues 403–455 is translocator domain; that stretch reads KVNFTAGVGGYRSSQALAIGSGYRVNENVALKAGVAYAGSSDVMYNASFNIEW.

It belongs to the autotransporter-2 (AT-2) (TC 1.B.40) family. Homotrimer; in gels migrates as monomers, dimers and homotrimers. Does not form trimers with distantly related EibA from E.coli; coexpression was lethal and one of the genes is eliminated in vivo. If the full translocator domain (368-455) is exchanged with that of EibA ('299-392'), will form heterotrimers with EibA and vice-versa.

It is found in the cell surface. The protein localises to the cell outer membrane. In terms of biological role, collagen-binding outer membrane protein forming a fibrillar matrix on the bacterial cell surface. Promotes initial attachment and invasion of eukaryotic cells. Also protects the bacteria by being responsible for agglutination, serum resistance, complement inactivation and phagocytosis resistance. The polypeptide is Adhesin YadA (yadA) (Yersinia enterocolitica).